The following is a 4625-amino-acid chain: MDRRLEWVKEKACLGLGVEPNLFEAAIANPESRARVTAFLDGTVTSSALLFALEEATIYVEEYQEVLAEEQAPEAEDGEGEEHDGQEPGEAGGEGAEGSTAPGDSGDGQPEDAPAAAAEANGANPEDEAAAPADGAADGAAGEGGEEGDGAEGDEPPAPPAPKYVRRVISVPKVVSKLNVALGSLPEELSVFPVFYFILNRSGHVAAEELDSAVEFGLLSEGPSLRILEQMLSSVFVPILVQMSGGDVASGGVLMQSMTDNSHRELLGNMQKFHSQVTQALQQLTGDVTLQLPDFPLEDMDRAAADTDLVMQLEQYMAEWSQVLASVLQRESQKHPTGKGPLAEIEFWRERNAVLSSLYEQLNLPQVKRMILVVEKGSDDRNLMAGFKSQLGELTKLATEARDNVKFLTTLERHFKNIATGPLGGILDTLPPMMNALRMVWIISRHYSDDQRMGSLFQRIAREIGDRVEAAVDLRHIFRMTSADAVELLKVCKSVLEHWLQTYMAMREKIELSGRDARWEFPKQLLFARTNYMAEICTDLIEMVEIVDDFFRFLGPELKTVTGDTAGIDRVVHRVVAMYEPIESISFNVFDYGNQHEWKAAKQQFYADNEDIKEATRELIDTSFRKLRSAEGACELLQSFKSIKSKGAIQKQVMNKFNDILEQFAREIEQTADIFERNKDAPPVTKNQPPVAGAIKWVRSLLERLKRTMAKLLSTEEEIIRTTELGQAVESKFKSFARSVMLTEKKWFSSWSDSINGVAMQHLKQTIFRRSAATNRVEVNFHPDLVRLIRETRYLDRMGFPIPEIALNVALQEDKFLQWLEGLNSMLFKYYESIDQLTPVERELMERKLEELESCLQPGFTILNWNSLGITEFIGTCDKAIATFQQLVKQVQKNSGIIEQVVYAIAGAQLVTEPEEGAEVMDLQEFYEDIERQRLAALESLVKKYRTISPLLGKIEEVVAGTNSGKSPALSSYYSFWERAIFNALNTMVLCAMTKLQDMIEQRSKHAEGGRKPPLFKVTVSLQSVDVVVQPPMTEVNKALGRLVRSLVESTKAFVRWMDGTCVETPEQRGATDDDEPIVFTFYWDVAANPQVIKTMLNLNQSIQRAITSVNKYAESWRRHQALWKTDKNSVLDKFKARDPSAAQFEDKLSKYAKMATEISAQAKDFDQDFIRVSCHALASSVCDEAQAWVRAIAQTMRELDAVTESQLRDKIAKYQTALHRPPDTLEELKQVLNTVNTIRGESMVMELRYADLEERYRTRLLYATNPEEESQCAHELASASQVRALWTELLNEAEAVDWSLEETKKKFSETTRSQVSDFAAITAELWEKFRTTGPGLPTVELASGLDELHKYESNLADALRQREQLVLAEKLFGMEITAYPELAQLESEIRKLAQVYGVYAEHAEAVRQYGGQLWSELDVGKMMAGTEAILTKLRKLKSLKLLPVYELVEKEIQGFYNSLPLMKELKSEALRKRHWTRLMEVTGQEFDMDPKTFTLGNMFAMQLHKYAEEIGKITNAAVKELTIESEIRKLADVWREQRFELGKYMKGPEDRGWVLRSTEDILVLLEDMGLNLQSMMASPFVRPFLTEVRAWEQKLSLIGECIEVWMHVQRKWMYLESIFVGSDDIRHQLPAEAKRFDNIDRQWQKIMNDTAKNTVVLDACMADGRLDLLKSLSEQLEVCQKSLSEYLDTKRCAFPRFYFISDDELLSILGTSDPTSVQEHMLKLFDNCAALVFGRGNKTITGMVSSEKEGFEFRNVVPIEGAVELWMTNVEAEMRKTLYQITKEGIFFYAKTPRTKWISENLGMVTLVGSQIWWTWETEDVFRRVRDGNKHSMKEFAAKLTGQLSELTSMVRSDLSNEVRKKVNTLIIIDVHARDIIDTYVRDSIVDAREFAWESQLRFYWDRQQDDILIRQCTGLFKYGYEYMGLNGRLVITALTDRCYMTLTTALTYRLGGAPAGPAGTGKTETTKDLAKSMALLCVVFNCGEGLDYKAMGSIFSGLVQCGAWGCFDEFNRIEAEVLSVVSSQIKNIQEALKNDLTRFQFEGKEISIDPRTGIFITMNPGYAGRTELPDNLKALFRPVTMVVPDLEQICEIMLFSEGFDSAKVLAKKMTVLYKLSREQLSKQHHYDFGLRALKSVLVMAGSLKRGAPDMSEQLVLMRALRDMNLPKFIFDDVPLFLGLINDLFPGMDCPRVRYPQFNDVVEADLADQGFKVLTEPSEQVDKVVQLYEVMMTRHTTMVVGQTGGGKTVILNTLARAQTKLGKKTHLYTINPKAISVAELYGVLDKDTRDWTDGLLSNIFREMNKPLPAERDEARYLVFDGDVDAVWVENMNSVMDDNKLLTLPNGERIRLQNHCKLLFEVFDLQYASPATISRCGMVYVDSRNLGYKPYIYTWLNSRAKQAEVDILRGLFEKYAVPSVDWILEGIDGEELVRRPKQAVPVTNLNMITQLCNLLNATITDHPRMSDPQILEAIFIFCTIWSLGAAIVQRPESPDRDRFDAFVKHIASMGLVDGERVAATQLPARSLYEYCFDTNEGVWKSWRSYLQPYEPPADGAFAKILVPTVDVVRSTWLLNTVVAAGKPCLFVGESGTAKSVTIANYLAHLDSTINIVLNVNFSSRTSSLDVQRAIEDSTEKRTKDTYGPPMGKRLLMFIDDLNMPRVDTYGTQQPIALLKLFIERKGLYDRGKELSWKNMKDVQVVGAMGPPGGARNPVDPRFISLFSVFEIQFPSNENLRTIYQAILSRHLAKLPTDEIRDQLGERLTDVTLELYNFIIDKLPPTPSRFHYIFNLRDLSRIYEGLLLTVGDVFKTPEQFLRLWRNECLRVLHDRLISTDDKRVMTERLEALVQQKFPNLAAHTLASPVLFGDFKNVINELQGEGEVAPRMYDDLGDYNSIKPLFEDVMTNFYNRKRKPMNLVFFEDALEHLTRIHRTLRLPQGNCLLVGVGGSGKQSLSKLAAFTAGCEVFEITLTRGYDELAFREDLKRLYAMLGSDNKRVMFLFTDAHVADEGFLELINNMLTSGMVPALYDGAEKDGLIGSVRAEVEKKGLLATKESCWSYYVDKCRNNLHVVLAMSPVGETLRSRCRNFPGMVNNTVIDWFEPWPEQALTSVASVFLAEEALPEALRPQIVEHMVTVHQSVRTFSTRFLEELRRYNYVTPKNYLDFINNYKRALATNRRTIEDTVTRLSGGLEKLIQAAVEVDAMQKELSQAQVVVAQATKECNELLEVISTNTVDVETKAKAAAIKEAQLKVDSEQIAIEKAEAEAALEEAIPALEEAAAALQDLSKDHITEIRSYAKPPEQVQKVCECVVILRNIKDVSWLGAKSMMADGNFLRSLVEFDKDSLTDKQVKKVKEYFKDPKAPLTYDSLRAISTAGAGLLKWVLAMVNYNNVARTVEPKRKKVAESEKNLRIAQKDLASTKLELQSLNDQLGKLRTQFEEKTAEQQDLKAKADLMERRLIAASKLIAGLGSERERWTRDIADLESRRDRLIGDCLLTSSFLSYTGAFTATYRHAMVYEMWQDDVKARGVPVTQPFRLEALLTSDVETTGWASEGLPSDELSIQNGILTVRANRWPLCIDPQMQAVNWIKSREGKMLEGKVKTFNDSDFLKQLELSIQYGFPFLFENLDEYIDPVIDPVLEKNLVPGDGKFVIKLGDKEVEWDSNFRLYMTSKLSNPHYGPEISGKTMIINYGVTQQGLTEQLLNVTLRHERSDLEEAREALIKQMSENKATLQALEDTLLRELSNAQGNILDNSELIATLESAKLKAVEIAEKLEASKVTAAEIEETRVRYSPAAKRGAILFFVIAGLSAITNMYEYSLASFLVVFNGSLHSSRRDASIEGRLRNIIDTLTYDVYAYTCLGLFERHKLMFSFQMTCKILEGDTPLDPQLLDFFLKGNLSLEKAARRKPFDWFPDAGWQDLMRLVELGQKKIGADGRMHALGSLANDVESDEAAWRTWYDLEAPEEAELPCGYQSFLSDFEKLCLMRCLRMDRVTVGITRFVIGVMGEKYVQPPVLEYRSIYKQSTETTPIVFVLSPGADPAFDVFKLGEEMGFRPGAKLKYMALGQGMGPKAQELIETGATRGLWIMLQNCHLLPTWLKTLEKILEKITKPHADFRLWLTTELTDRFPLGVLQRSLKVVTEPPNGLKLNMRQSYSKITEEVLADCPHQAFRPLVYVLGFFHAVVQERRKYGKLGWNVPYDFNETDFRISMALISTYLTKAWDAQDDLIPWGTLRYLIGEAMYGGRVSDSYDRRILTTYLDEYLGDFLFDTFQPFRFYACKDYEIAIPQTGSRDTYLKAVEALPLVQSPEAFGLNANADISYYTSATKAIWTDLVDLQPRTGGGGGGVAREEFIGGVARDIAAKIPEPFDLPQLRKELGTPSPTQVVLLQELERWNSVLGVMVSSLRDLQRALSGEIGFSSRLEELASSLYNGKLPAMWARLNPATEKALGAWMLWFGRRYRQYKDWTEHGEPKVIWLSGLHIPETYIAALVQAACRDKGWPLDKSTLYTKVTKFTDPYQVSERPKYGCYMSGLYLEGAAWDLEASQLRKQDPKVLVNELPILQVIPIEANKLKLANTFRAPVYVTQARRNAMGVGLVFDADLASAEHSSHWVLQGVALVLNIDQ.

Positions 1–1919 (MDRRLEWVKE…LIRQCTGLFK (1919 aa)) are stem. Acidic residues predominate over residues 70–84 (EQAPEAEDGEGEEHD). Residues 70–163 (EQAPEAEDGE…DEPPAPPAPK (94 aa)) form a disordered region. A compositionally biased stretch (low complexity) spans 111-140 (EDAPAAAAEANGANPEDEAAAPADGAADGA). Acidic residues predominate over residues 144–155 (GGEEGDGAEGDE). Residue 960-967 (AGTNSGKS) coordinates ATP. 2 coiled-coil regions span residues 1227–1259 (EELKQVLNTVNTIRGESMVMELRYADLEERYRT) and 1339–1409 (TVEL…AVRQ). AAA regions lie at residues 1920–2141 (YGYE…VLVM), 2201–2437 (DVVE…RRPK), 2550–2800 (EPPA…IYEG), and 2906–3155 (NFYN…LRRY). ATP contacts are provided by residues 1958–1965 (GPAGTGKT), 2242–2249 (GQTGGGKT), 2588–2595 (GESGTAKS), and 2945–2952 (GVGGSGKQ). Coiled coils occupy residues 3192-3297 (LEKL…IRSY) and 3400-3494 (KRKK…LIGD). The stalk stretch occupies residues 3192–3494 (LEKLIQAAVE…ESRRDRLIGD (303 aa)). 2 AAA regions span residues 3542–3773 (LTSD…EIAE) and 3998–4216 (ITRF…LIST). 3680–3687 (GPEISGKT) is an ATP binding site. A coiled-coil region spans residues 3701 to 3788 (EQLLNVTLRH…KVTAAEIEET (88 aa)).

The protein belongs to the dynein heavy chain family. In terms of assembly, the I1 inner arm complex (also known as the f dynein complex) is a two-headed isoform composed of two heavy chains (1-alpha and 1-beta), three intermediate chains and three light chains. I1 occupies a specific position proximal to the first radial spoke and repeats every 96 nm along the length of the axoneme.

Its subcellular location is the cell projection. The protein resides in the cilium. It localises to the flagellum. The protein localises to the cytoplasm. It is found in the cytoskeleton. Its subcellular location is the flagellum axoneme. Functionally, force generating protein of eukaryotic cilia and flagella. Produces force towards the minus ends of microtubules. Dynein has ATPase activity; the force-producing power stroke is thought to occur on release of ADP. Required for assembly of the I1 inner arm complex and its targeting to the appropriate axoneme location. Also required for phototaxis. This chain is Dynein-1-alpha heavy chain, flagellar inner arm I1 complex (DHC1), found in Chlamydomonas reinhardtii (Chlamydomonas smithii).